Reading from the N-terminus, the 369-residue chain is Immunoglobulin superfamily member 5 (369 aa).

Positions 1–24 (MEGSWRDVLAVLVILAQLTVSGSS) are cleaved as a signal peptide. 2 consecutive Ig-like V-type domains span residues 25–125 (YQII…LSVQ) and 128–217 (GTLN…LTVN). At 25–239 (YQIIEGPRNV…GEGQALPTWA (215 aa)) the chain is on the extracellular side. 2 N-linked (GlcNAc...) asparagine glycosylation sites follow: asparagine 33 and asparagine 45. A disulfide bond links cysteine 46 and cysteine 109. N-linked (GlcNAc...) asparagine glycosylation is found at asparagine 146, asparagine 196, and asparagine 217. Cysteine 149 and cysteine 201 are joined by a disulfide. Residues 240–260 (IILLAVAFSLLLILIIALIII) form a helical membrane-spanning segment. Topologically, residues 261–369 (FCCCCVSRRE…PQKIRNVTIV (109 aa)) are cytoplasmic. The tract at residues 321–354 (PKSGEVSLPEQRSSLPQQELDKHRPSPVTHPRVS) is disordered.

The protein belongs to the immunoglobulin superfamily. As to quaternary structure, interacts with MAGI1 at tight junctions, forms a tripartite complex with NPHS1. Interacts with LNX1 isoform 2 via its PDZ 2 domain, it may also interact with other isoforms containing this domain. As to expression, in kidney, it is found in glomeruli and in the proximal tubules (at protein level).

The protein localises to the apical cell membrane. The protein resides in the cell junction. Its subcellular location is the tight junction. In terms of biological role, provides, together with MAGI1, an adhesion machinery at tight junctions, which may regulate the permeability of kidney glomerulus and small intestinal epithelial cells. Mediates calcium-independent homophilic cell adhesion. In testis, it may function as a cell adhesion molecule rather than a tight-junction protein. It may participate in the adhesion between spermatogonia-spermatogonia, spermatogonia-Sertoli cells, and Sertoli cells-Sertoli cells. The sequence is that of Immunoglobulin superfamily member 5 (Igsf5) from Rattus norvegicus (Rat).